A 424-amino-acid chain; its full sequence is Probable serine/threonine-protein kinase PBL6 (424 aa).

The segment at 1-26 (MGCFGRTPKSNKRSDTKTTKNNDFTP) is disordered. The N-myristoyl glycine moiety is linked to residue glycine 2. Cysteine 3 carries the S-palmitoyl cysteine lipid modification. Phosphothreonine is present on threonine 87. A Protein kinase domain is found at 98–377 (FKSDCFLGEG…VVMALDHLAS (280 aa)). Residues 104–112 (LGEGGFGKV) and lysine 127 contribute to the ATP site. Tyrosine 172 carries the phosphotyrosine modification. Residue aspartate 225 is the Proton acceptor of the active site. A phosphoserine mark is found at serine 229 and serine 259. Threonine 260 and threonine 265 each carry phosphothreonine. The residue at position 273 (tyrosine 273) is a Phosphotyrosine.

This sequence belongs to the protein kinase superfamily. Ser/Thr protein kinase family.

It is found in the cell membrane. The catalysed reaction is L-seryl-[protein] + ATP = O-phospho-L-seryl-[protein] + ADP + H(+). It carries out the reaction L-threonyl-[protein] + ATP = O-phospho-L-threonyl-[protein] + ADP + H(+). Its function is as follows. May be involved in plant defense signaling. The polypeptide is Probable serine/threonine-protein kinase PBL6 (Arabidopsis thaliana (Mouse-ear cress)).